The primary structure comprises 1017 residues: MLGLPNELSGSQVPGATEYEPGWRRVFKVEDLPGLGDYHIDNQTAVPTSIVCVIALAAAMDISNGKQANSIELYDVTIGRPIHLGTSPVEIETMIAIEPGKDGADSIQAEFSLNKSAGHDENPVSVANGRLRMTFAGHELELLSSRQAKPCGLRPVSISPFYDSLREVGLGYSGPFRALTSAERRMDYACGVIAPTTGEASRTPALLHPAMLEACFQTLLLAFAAPRDGSLWTIFVPTQIGRLTIFPNSSVGINTPASVTIDTHLHEFTAGHKADLPMIKGDVSVYSSEAGQLRIRLEGLTMSPIAPSTEKQDKRLYLKRTWLPDILSGPVLERGKPVFCYELFGLSLAPKSILAATRLLSHRYAKLKILQVGTSSVHLVHSLCRELGSSMDSYTIACESDSSMEDMRRRLLSDALPIKYVVLDIGKSLTEGDEPAAGEPTDLGSFDLIILLKASADDSPILKRTRGLIKPGGFLLMTVAATEAIPWEARDMTRKAIHDTLQSVGFSGVDLLQRDPEGDSSFVILSQAVDHQIRFLRAPFDSTPPFPTRGTLLVIGGASHRAKRPIETIQNSLRRVWAGEIVLIRSLTDLQTRGLDHVEAVLSLTELDQSVLENLSRDTFDGLHRLLHQSKIVLWVTYSAGNLNPHQSGAIGLVRAVQAETPDKVLQLLDVDQIDGNDGLVAESFLRLIGGVKMKDGSSNSLWTVEPELSVQGGRLLIPRVLFDKKRNDRLNCLRRQLKATDSFEKQSALARPIDPCSLFSPNKTYVLAGLSGQMGQSITRWIVQSGGRHIVITSRNPDKDDLWTKELEQRGAHIEIMAADVTKKQEMINVRNQILSAMPPIGGVANGAMLQSNCFFSDLTYEALQDVLKPKVDGSLVLDEVFSSDDLDFFLLFSSISAVVGQPFQANYDAANNFMTGLVLQRRARNLPASVINLGPIIGLGFIQNIDSGGGSEAVIATLRSLDYMLVSERELHHILAEAILIGKSDETPEIITGLETVSDNPAPFWHKSLLFSHII.

The tract at residues 6 to 138 (NELSGSQVPG…GRLRMTFAGH (133 aa)) is N-terminal hotdog fold. The 306-residue stretch at 6-311 (NELSGSQVPG…MSPIAPSTEK (306 aa)) folds into the PKS/mFAS DH domain. Residues 8–306 (LSGSQVPGAT…LEGLTMSPIA (299 aa)) form a dehydratase (DH) region. Residues 153 to 311 (LRPVSISPFY…MSPIAPSTEK (159 aa)) form a C-terminal hotdog fold region. Positions 532–720 (QIRFLRAPFD…VQGGRLLIPR (189 aa)) are ketoreductase (KR).

The enzyme catalyses fumagillol + NADP(+) = 5-dehydrofumagillol + NADPH + H(+). The protein operates within secondary metabolite biosynthesis; terpenoid biosynthesis. Functionally, stereoselective keto-reductase; part of the gene cluster that mediates the biosynthesis of fumagillin, a meroterpenoid that has numerous biological activities including irreversible inhibition of human type 2 methionine aminopeptidase (METAP2). Within the pathway, the keto-reductase af490 acts as a 5-dehydrofumagillol 5-reductase that stereoselectively reduces 5-keto-fumagillol to 5R-hydroxy-seco-sesquiterpene. The pathway begins with the conversion of farnesyl pyrophosphate (FPP) to beta-trans-bergamotene by the membrane-bound beta-trans-bergamotene synthase af520. The multifunctional cytochrome P450 monooxygenase af510 then converts beta-trans-bergamotene into 5-keto-demethoxyfumagillol via several oxydation steps. 5-keto-demethoxyfumagillol is then subjected to successive C-6 hydroxylation and O-methylation by the dioxygenase af480 and O-methyltransferase af390-400, respectively, to yield 5-keto-fumagillol, which is then stereoselectively reduced by the keto-reductase af490 to 5R-hydroxy-seco-sesquiterpene. The next step is the polyketide transferase af380-catalyzed transfer of a dodecapentaenoyl group synthesized by the polyketide synthase af370 onto 5R-hydroxy-seco-sesquiterpene which leads to the production of prefumagillin. Finally, oxidative cleavage by the monooxygenase af470 converts prefumagillin to fumagillin. This chain is Stereoselective keto-reductase af490, found in Aspergillus fumigatus (strain ATCC MYA-4609 / CBS 101355 / FGSC A1100 / Af293) (Neosartorya fumigata).